A 696-amino-acid chain; its full sequence is MAREYKIEDYRNFGIMAHIDAGKTTTTERVLYYTGKSHKIGEVHDGAATMDWMEQEQERGITITSAATTTFWKGRDGKMRRFNIIDTPGHVDFTIEVERSLRVLDGAIALLDANAGVEPQTETVWRQADKYRVPRMIFCNKMDKIGADFYRSVEMIGSRLGAQAVVMQLPIGAETEFKGVVDLVEMNALVWRDETLGAAWDVVEIPADLQARAQEYREKMIEAAVEMDETALENYLEGKMPSNDEIRSLIRKGTIAVKFFPMFCGSAFKNKGVQPLLDAVVEYLPSPADVPAIKGVDAKTDAEIERHAVDDEPLSMLAFKIMNDPFVGSLTFARIYSGKLTKGISVDNTVKGKKERIGRMLQMHANSRADVEEAFAGDIVALAGLKDTTTGDTLCDPLHPVILERMEFPDPVIQIAIEPKTKNDQEKMGLALHRLAAEDPSFRVKTDEESGQTIISGMGELHLDIIVDRMRREFKVEANVGAPQVAYRETITRKHEQDYTHKKQTGGTGQFARVKVLFEPNTESEEFVFESKIVGGAVPKEYIPGVEKGIQSVMGAGPFAGFPMIGVRATLIDGAYHDVDSSVLAFEIASRACFREAAPKLGVQLLEPIMKVEVVTPEDYVGSVIGDLNGRRGQIQGQEARGVAVVINAMVPLANMFKYVDNLRSMSQGRAAYTMQFDHYEPVPTAVAQEVQKKYA.

Positions 8–288 (EDYRNFGIMA…AVVEYLPSPA (281 aa)) constitute a tr-type G domain. GTP-binding positions include 17–24 (AHIDAGKT), 86–90 (DTPGH), and 140–143 (NKMD).

The protein belongs to the TRAFAC class translation factor GTPase superfamily. Classic translation factor GTPase family. EF-G/EF-2 subfamily.

Its subcellular location is the cytoplasm. In terms of biological role, catalyzes the GTP-dependent ribosomal translocation step during translation elongation. During this step, the ribosome changes from the pre-translocational (PRE) to the post-translocational (POST) state as the newly formed A-site-bound peptidyl-tRNA and P-site-bound deacylated tRNA move to the P and E sites, respectively. Catalyzes the coordinated movement of the two tRNA molecules, the mRNA and conformational changes in the ribosome. This is Elongation factor G from Mesorhizobium japonicum (strain LMG 29417 / CECT 9101 / MAFF 303099) (Mesorhizobium loti (strain MAFF 303099)).